The sequence spans 243 residues: Zinc import ATP-binding protein ZnuC (243 aa).

An ABC transporter domain is found at 8–225; sequence LNLSNVSYYI…SEFQKLFGHH (218 aa). 40–47 serves as a coordination point for ATP; it reads GPNGAGKS.

It belongs to the ABC transporter superfamily. Zinc importer (TC 3.A.1.15.5) family. As to quaternary structure, the complex is composed of two ATP-binding proteins (ZnuC), two transmembrane proteins (ZnuB) and a solute-binding protein (ZnuA).

Its subcellular location is the cell inner membrane. It catalyses the reaction Zn(2+)(out) + ATP(in) + H2O(in) = Zn(2+)(in) + ADP(in) + phosphate(in) + H(+)(in). In terms of biological role, part of the ABC transporter complex ZnuABC involved in zinc import. Responsible for energy coupling to the transport system. This is Zinc import ATP-binding protein ZnuC from Psychrobacter arcticus (strain DSM 17307 / VKM B-2377 / 273-4).